Reading from the N-terminus, the 600-residue chain is MKIDTIRNFSIIAHIDHGKSTLADRLLEYTGALTEREMQDQFLDKMDLERERGITIKAQTVRLTYRADDGNDYILNLIDTPGHVDFTYEVSRSLAACEGALLVVDASQGVEAQTLANVYLAIDNNLEVFPVLNKIDLPAAEPERVKHEIEEIIGLDAHDAVMASAKEGIGTREILEEIVKKIPPPEGDPAAPLKALLFDSWYDQYQGVIILVRVIDGTVKKGDKIQLVSTGRSYEALKVGVFAPVMREVPQLAAGEVGFLIAGIKDVADAKIGDTVTHALKPCVTPLGGFKEVKPMVFSGLYPIDTAQYEQLRDALAKLKLNDSSFSFEPETSLALGFGFRCGFLGLLHMEIIQERLEREFNLDLITTAPTVVYKVHRIKGDVITIESANQLPPLQEIDYIEEPFILASIHTPNEFVGGILSLCEEKRGVQREIKYLTPTRVMIIYELPLNEVVLDFYDRLKSITKGYASLDYEHLNYRRSDLVRMNILINGEAVDALSLIIHRDKAYYRGRDLVSKMKELIPRQMFEVVIQAAIGAKVIARETVKALRKDVLAKCYGGDITRKRKLLEKQKEGKKRMKNVGNVELPQEAFLAILKVEEK.

The region spanning 4–186 (DTIRNFSIIA…EIVKKIPPPE (183 aa)) is the tr-type G domain. Residues 16 to 21 (DHGKST) and 133 to 136 (NKID) each bind GTP.

The protein belongs to the TRAFAC class translation factor GTPase superfamily. Classic translation factor GTPase family. LepA subfamily.

It localises to the cell inner membrane. The catalysed reaction is GTP + H2O = GDP + phosphate + H(+). In terms of biological role, required for accurate and efficient protein synthesis under certain stress conditions. May act as a fidelity factor of the translation reaction, by catalyzing a one-codon backward translocation of tRNAs on improperly translocated ribosomes. Back-translocation proceeds from a post-translocation (POST) complex to a pre-translocation (PRE) complex, thus giving elongation factor G a second chance to translocate the tRNAs correctly. Binds to ribosomes in a GTP-dependent manner. The protein is Elongation factor 4 of Geobacter sulfurreducens (strain ATCC 51573 / DSM 12127 / PCA).